We begin with the raw amino-acid sequence, 353 residues long: E3 ubiquitin-protein ligase Os03g0188200 (353 aa).

Residues 48–68 (VVVLVALITAFVLLTVFSVLI) traverse the membrane as a helical segment. Residues 133-175 (CAVCLAEFADSDELRVLPACCHVFHPDCIDPWLAAAVTCPLCR) form an RING-type; atypical zinc finger. Composition is skewed to basic and acidic residues over residues 308-318 (ADWDAGEEHGG) and 340-353 (GSKE…LNRV). Residues 308-353 (ADWDAGEEHGGSKRVHPVAGAQDETPSGSGSDGSKENSDSDALNRV) are disordered.

It is found in the membrane. It carries out the reaction S-ubiquitinyl-[E2 ubiquitin-conjugating enzyme]-L-cysteine + [acceptor protein]-L-lysine = [E2 ubiquitin-conjugating enzyme]-L-cysteine + N(6)-ubiquitinyl-[acceptor protein]-L-lysine.. It participates in protein modification; protein ubiquitination. In terms of biological role, possesses E3 ubiquitin-protein ligase in vitro. This Oryza sativa subsp. japonica (Rice) protein is E3 ubiquitin-protein ligase Os03g0188200.